A 144-amino-acid polypeptide reads, in one-letter code: MEKFSNIAQLKDSGLKVTGPRLKILDLFEKHAEEHLSAEDVYRILLEEGVEIGVATIYRVLTQFEQAGILQRHHFETGKAVYELDKGDHHDHIVCVKCGEVTEFHNPEIEALQDKIAEENGYRIVDHALYMYGVCSDCQAKGKR.

The tract at residues 1–86 (MEKFSNIAQL…TGKAVYELDK (86 aa)) is DNA-binding. Zn(2+) is bound by residues histidine 35 and glutamate 83. The dimerization stretch occupies residues 87–144 (GDHHDHIVCVKCGEVTEFHNPEIEALQDKIAEENGYRIVDHALYMYGVCSDCQAKGKR). The Fe cation site is built by histidine 89 and aspartate 91. Residues histidine 92, cysteine 95, cysteine 98, and glutamate 103 each coordinate Zn(2+). Fe cation is bound by residues glutamate 110 and histidine 127.

This sequence belongs to the Fur family. In terms of assembly, homodimer.

The protein localises to the cytoplasm. Acts as a global negative controlling element, employing Fe(2+) as a cofactor to bind the operator of the repressed genes. Regulates the expression of the fbp protein. This Neisseria gonorrhoeae protein is Ferric uptake regulation protein (fur).